Here is a 3206-residue protein sequence, read N- to C-terminus: Highly reducing polyketide synthase ltbA (3206 aa).

The Ketosynthase family 3 (KS3) domain maps to 5–434 (PAPIAIIGVG…GTNCHVILEA (430 aa)). Active-site for beta-ketoacyl synthase activity residues include C179, H314, and H354. Positions 441–463 (PTGTNGIKTNGTRINGIKTNGAD) are enriched in polar residues. The disordered stretch occupies residues 441-472 (PTGTNGIKTNGTRINGIKTNGADTNERESMKN). The malonyl-CoA:ACP transacylase (MAT) domain stretch occupies residues 575–890 (VFSGQGAQWH…EYLSALQRNT (316 aa)). Positions 958-1098 (HDLLGLFDPA…GEITVEYETD (141 aa)) are N-terminal hotdog fold. Positions 958–1278 (HDLLGLFDPA…LLVNLRAIGE (321 aa)) are dehydratase (DH) domain. Residues 958 to 1284 (HDLLGLFDPA…AIGETREDED (327 aa)) form the PKS/mFAS DH domain. The Proton acceptor; for dehydratase activity role is filled by H990. The segment at 1128-1284 (DTDMTKSEFY…AIGETREDED (157 aa)) is C-terminal hotdog fold. The active-site Proton donor; for dehydratase activity is the D1193. Residues 1450–1640 (ESGILVGPYE…LARNGFGGIH (191 aa)) are methyltransferase (CMet) domain. The enoyl reductase (ER) domain stretch occupies residues 1871–2185 (LLSSLRFVDD…RKHTGKVVLQ (315 aa)). Residues 2208–2395 (GTYVAAGGLG…SVDAHGALKE (188 aa)) form a ketoreductase (KR) domain region. In terms of domain architecture, Carrier spans 2499–2577 (EEAEQLIRDA…ALAATVASRS (79 aa)). S2537 bears the O-(pantetheine 4'-phosphoryl)serine mark. The segment at 2584 to 2611 (IRHSSRLQEATTQAENKDAPKNEKEGPS) is disordered. The span at 2598–2610 (ENKDAPKNEKEGP) shows a compositional bias: basic and acidic residues. The segment at 2994-3206 (HLIPSFGKAV…IKTIIQAGQE (213 aa)) is carnitine O-acyltransferase (cAT) domain.

Requires pantetheine 4'-phosphate as cofactor.

The protein operates within secondary metabolite biosynthesis. Highly reducing polyketide synthase; part of the gene cluster that mediates the biosynthesis of luteodienoside A, a glycosylated polyketide consisting of an unusual 1-O-beta-D-glucopyranosyl-myo-inositol (glucinol) ester of 3-hydroxy-2,2,4-trimethylocta-4,6-dienoic acid. LtbA produces the trimethylated polyketide chain from acetyl-CoA, malonyl-CoA and S-adenosylmethionine (SAM). The ltbA carnitine O-acyltransferase (cAT) domain then uses glucinol produced by the glycosyltransferase ltbB as an offloading substrate to release luteodienoside A. Furthermore, the PKS C-methyltransferase (CMeT) domain is capable of catalysing gem-dimethylation of the 3-hydroxy-2,2,4-trimethylocta-4,6-dienoic acid intermediate, without requiring reversible product release and recapture by the cAT domain. Since ltbA and ltbB are sufficient for the biosynthesis of luteodienoside A, the functions of the methyltransferase ltbC and the FAD-binding monooxygenase ltbD within the pathway remain obscur. The chain is Highly reducing polyketide synthase ltbA from Aspergillus luteorubrus.